We begin with the raw amino-acid sequence, 950 residues long: Leucine--tRNA ligase (950 aa).

The 'HIGH' region motif lies at 72–83 (PYPSGEGLHVGH). Residues 722–726 (KIGKS) carry the 'KMSKS' region motif. K725 provides a ligand contact to ATP.

The protein belongs to the class-I aminoacyl-tRNA synthetase family.

Its subcellular location is the cytoplasm. The catalysed reaction is tRNA(Leu) + L-leucine + ATP = L-leucyl-tRNA(Leu) + AMP + diphosphate. The protein is Leucine--tRNA ligase of Mycobacterium sp. (strain JLS).